Consider the following 334-residue polypeptide: Methionyl-tRNA formyltransferase (334 aa).

Position 111–114 (111–114 (SLLP)) interacts with (6S)-5,6,7,8-tetrahydrofolate.

Belongs to the Fmt family.

It carries out the reaction L-methionyl-tRNA(fMet) + (6R)-10-formyltetrahydrofolate = N-formyl-L-methionyl-tRNA(fMet) + (6S)-5,6,7,8-tetrahydrofolate + H(+). Its function is as follows. Attaches a formyl group to the free amino group of methionyl-tRNA(fMet). The formyl group appears to play a dual role in the initiator identity of N-formylmethionyl-tRNA by promoting its recognition by IF2 and preventing the misappropriation of this tRNA by the elongation apparatus. This chain is Methionyl-tRNA formyltransferase, found in Cyanothece sp. (strain PCC 7425 / ATCC 29141).